The chain runs to 71 residues: General transcription factor IIH subunit 5 (71 aa).

Residue Thr69 is modified to Phosphothreonine.

It belongs to the TFB5 family. As to quaternary structure, component of the 7-subunit TFIIH core complex composed of XPB/ERCC3, XPD/ERCC2, GTF2H1, GTF2H2, GTF2H3, GTF2H4 and GTF2H5, which is active in NER. The core complex associates with the 3-subunit CDK-activating kinase (CAK) module composed of CCNH/cyclin H, CDK7 and MNAT1 to form the 10-subunit holoenzyme (holo-TFIIH) active in transcription. Part of TBP-based Pol II pre-initiation complex (PIC), in which Pol II core assembles with general transcription factors and other specific initiation factors including GTF2E1, GTF2E2, GTF2F1, GTF2F2, TCEA1, ERCC2, ERCC3, GTF2H2, GTF2H3, GTF2H4, GTF2H5, GTF2A1, GTF2A2, GTF2B and TBP; this large multi-subunit PIC complex mediates DNA unwinding and targets Pol II core to the transcription start site where the first phosphodiester bond forms.

It is found in the nucleus. It localises to the cytoplasm. In terms of biological role, component of the general transcription and DNA repair factor IIH (TFIIH) core complex, which is involved in general and transcription-coupled nucleotide excision repair (NER) of damaged DNA and, when complexed to CAK, in RNA transcription by RNA polymerase II. In NER, TFIIH acts by opening DNA around the lesion to allow the excision of the damaged oligonucleotide and its replacement by a new DNA fragment. In transcription, TFIIH has an essential role in transcription initiation. When the pre-initiation complex (PIC) has been established, TFIIH is required for promoter opening and promoter escape. Phosphorylation of the C-terminal tail (CTD) of the largest subunit of RNA polymerase II by the kinase module CAK controls the initiation of transcription. Necessary for the stability of the TFIIH complex and for the presence of normal levels of TFIIH in the cell. In Mus musculus (Mouse), this protein is General transcription factor IIH subunit 5.